We begin with the raw amino-acid sequence, 207 residues long: Superoxide dismutase [Mn] (207 aa).

Mn(2+)-binding residues include histidine 28, histidine 76, aspartate 160, and histidine 164.

It belongs to the iron/manganese superoxide dismutase family. Mn(2+) serves as cofactor.

The catalysed reaction is 2 superoxide + 2 H(+) = H2O2 + O2. In terms of biological role, destroys superoxide anion radicals which are normally produced within the cells and which are toxic to biological systems. The chain is Superoxide dismutase [Mn] (sodA) from Nocardia asteroides.